The primary structure comprises 975 residues: C-1-tetrahydrofolate synthase, mitochondrial (975 aa).

Residues 1 to 34 (MLSRLSLLSNSRAFQQARWRIYRLKVSPTVHASQ) constitute a mitochondrion transit peptide. Residues 35–343 (YHILSGRKLA…KPLPLHLESP (309 aa)) are methylenetetrahydrofolate dehydrogenase and cyclohydrolase. Substrate is bound by residues 83–87 (YVRMK) and 130–132 (IQL). NADP(+) contacts are provided by residues 201–203 (GRS) and Ser-226. A substrate-binding site is contributed by 301-305 (PGGVG). Residues 344–975 (VPSDIDISRA…DDDGEIEGLF (632 aa)) are formyltetrahydrofolate synthetase. 408 to 415 (TPLGEGKS) is a binding site for ATP.

This sequence in the N-terminal section; belongs to the tetrahydrofolate dehydrogenase/cyclohydrolase family. The protein in the C-terminal section; belongs to the formate--tetrahydrofolate ligase family. In terms of assembly, homodimer.

Its subcellular location is the mitochondrion. The catalysed reaction is (6R)-5,10-methylene-5,6,7,8-tetrahydrofolate + NADP(+) = (6R)-5,10-methenyltetrahydrofolate + NADPH. The enzyme catalyses (6R)-5,10-methenyltetrahydrofolate + H2O = (6R)-10-formyltetrahydrofolate + H(+). It catalyses the reaction (6S)-5,6,7,8-tetrahydrofolate + formate + ATP = (6R)-10-formyltetrahydrofolate + ADP + phosphate. The protein operates within one-carbon metabolism; tetrahydrofolate interconversion. Mitochondrial isozyme of C-1-tetrahydrofolate synthase. The trifunctional enzyme catalyzes the interconversion of the one-carbon derivatives of tetrahydrofolate (THF) between different oxidation states by the enzymatic activities 10-formyltetrahydrofolate synthetase, 5,lO-methenyltetrahydrofolate cyclohydrolase, and 5,lO-methylenetetrahydrofolate dehydrogenase. The sequence is that of C-1-tetrahydrofolate synthase, mitochondrial from Saccharomyces cerevisiae (strain ATCC 204508 / S288c) (Baker's yeast).